The chain runs to 104 residues: A-type ATP synthase subunit F (104 aa).

It belongs to the V-ATPase F subunit family. As to quaternary structure, has multiple subunits with at least A(3), B(3), C, D, E, F, H, I and proteolipid K(x).

It localises to the cell membrane. Its function is as follows. Component of the A-type ATP synthase that produces ATP from ADP in the presence of a proton gradient across the membrane. The protein is A-type ATP synthase subunit F of Thermoplasma acidophilum (strain ATCC 25905 / DSM 1728 / JCM 9062 / NBRC 15155 / AMRC-C165).